We begin with the raw amino-acid sequence, 128 residues long: Small ribosomal subunit protein bS6 (128 aa).

The protein belongs to the bacterial ribosomal protein bS6 family.

In terms of biological role, binds together with bS18 to 16S ribosomal RNA. This chain is Small ribosomal subunit protein bS6, found in Geotalea uraniireducens (strain Rf4) (Geobacter uraniireducens).